The sequence spans 112 residues: Phosphoribosyl-ATP pyrophosphatase (112 aa).

The protein belongs to the PRA-PH family.

The protein localises to the cytoplasm. It carries out the reaction 1-(5-phospho-beta-D-ribosyl)-ATP + H2O = 1-(5-phospho-beta-D-ribosyl)-5'-AMP + diphosphate + H(+). It functions in the pathway amino-acid biosynthesis; L-histidine biosynthesis; L-histidine from 5-phospho-alpha-D-ribose 1-diphosphate: step 2/9. In Chromohalobacter salexigens (strain ATCC BAA-138 / DSM 3043 / CIP 106854 / NCIMB 13768 / 1H11), this protein is Phosphoribosyl-ATP pyrophosphatase.